The chain runs to 562 residues: uncharacterized protein (562 aa).

5 consecutive transmembrane segments (helical) span residues 10-27 (IYPE…YWVG), 34-53 (FSLG…GQFD), 63-85 (IFFL…QGIA), 92-114 (ALFA…KIAG), and 155-177 (FSVI…AIVL). RCK C-terminal domains lie at 204 to 288 (TENA…HPDS) and 290 to 377 (DETQ…QLGV). 6 consecutive transmembrane segments (helical) span residues 387-404 (VAFW…GSLV), 408-430 (GNLP…FSWV), 443-465 (PTVW…ISAG), 475-497 (LGFS…AALV), 504-526 (FHPA…LGMI), and 539-561 (YTIT…ILIL).

Belongs to the AAE transporter (TC 2.A.81) family.

The protein localises to the cell membrane. This is an uncharacterized protein from Shewanella oneidensis (strain ATCC 700550 / JCM 31522 / CIP 106686 / LMG 19005 / NCIMB 14063 / MR-1).